We begin with the raw amino-acid sequence, 424 residues long: Glutamate-1-semialdehyde 2,1-aminomutase (424 aa).

At Lys-268 the chain carries N6-(pyridoxal phosphate)lysine.

It belongs to the class-III pyridoxal-phosphate-dependent aminotransferase family. HemL subfamily. Requires pyridoxal 5'-phosphate as cofactor.

It is found in the cytoplasm. The enzyme catalyses (S)-4-amino-5-oxopentanoate = 5-aminolevulinate. It functions in the pathway porphyrin-containing compound metabolism; protoporphyrin-IX biosynthesis; 5-aminolevulinate from L-glutamyl-tRNA(Glu): step 2/2. In Methanosarcina acetivorans (strain ATCC 35395 / DSM 2834 / JCM 12185 / C2A), this protein is Glutamate-1-semialdehyde 2,1-aminomutase.